Here is a 133-residue protein sequence, read N- to C-terminus: Small ribosomal subunit protein uS8 (133 aa).

Belongs to the universal ribosomal protein uS8 family. Part of the 30S ribosomal subunit. Contacts proteins S5 and S12.

In terms of biological role, one of the primary rRNA binding proteins, it binds directly to 16S rRNA central domain where it helps coordinate assembly of the platform of the 30S subunit. This chain is Small ribosomal subunit protein uS8, found in Gloeobacter violaceus (strain ATCC 29082 / PCC 7421).